Here is a 348-residue protein sequence, read N- to C-terminus: Gamma-glutamyl hydrolase 1 (348 aa).

The N-terminal stretch at 1–23 (MIDNNCLYKEELNRNSYSGLAKE) is a signal peptide. One can recognise a Gamma-glutamyl hydrolase domain in the interval 46 to 342 (SPDPNLNYRP…RGYDEVYIFT (297 aa)). Cysteine 156 (nucleophile) is an active-site residue. Histidine 269 is an active-site residue.

The protein belongs to the peptidase C26 family. Highly expressed in roots and at lower levels in leaves, stems and siliques.

Its subcellular location is the vacuole. It localises to the secreted. The protein localises to the extracellular space. It is found in the cell wall. The catalysed reaction is (6S)-5,6,7,8-tetrahydrofolyl-(gamma-L-Glu)(n) + (n-1) H2O = (6S)-5,6,7,8-tetrahydrofolate + (n-1) L-glutamate. In terms of biological role, cleaves the polyglutamate sidechains of folate polyglutamates in the vacuole. Is important for polyglutamyl tail length determination before vacuolar exit. Plays a role in folate stability and intracellular folate content. The chain is Gamma-glutamyl hydrolase 1 (GGH1) from Arabidopsis thaliana (Mouse-ear cress).